A 415-amino-acid polypeptide reads, in one-letter code: Trehalose synthase (415 aa).

This sequence belongs to the glycosyltransferase group 1 family. Glycosyltransferase 4 subfamily. In terms of assembly, homodimer. It depends on Mg(2+) as a cofactor.

It catalyses the reaction an NDP-alpha-D-glucose + D-glucose = alpha,alpha-trehalose + a ribonucleoside 5'-diphosphate + H(+). Its function is as follows. Synthesizes trehalose from ADP-, UDP- or GDP-glucose and glucose. In Pyrococcus horikoshii (strain ATCC 700860 / DSM 12428 / JCM 9974 / NBRC 100139 / OT-3), this protein is Trehalose synthase.